The sequence spans 636 residues: Capsid vertex component 2 (636 aa).

The segment at 1–48 is interaction with major capsid protein/MCP; that stretch reads MSLLHTFWRLPVAVFFEPHEENVLRCPERVLRRLLEDAAVAMRGGGWR. Residues 97-125 are disordered; the sequence is DEGPSPRTLLQPPCRPRSSSPGTGVAGAS.

It belongs to the herpesviridae CVC2 protein family. In terms of assembly, heterodimerizes with CVC1. Interacts with major capsid protein/MCP and triplex capsid protein 1/TRX1 at the pentamer vertices. Interacts with the large tegument protein/LTP.

The protein localises to the virion. The protein resides in the host nucleus. Capsid vertex-specific component that plays a role during viral DNA encapsidation, assuring correct genome cleavage and presumably stabilizing capsids that contain full-length viral genomes. Participates in the interaction between the capsid and the tegument through interaction with the large tegument protein/LTP. The chain is Capsid vertex component 2 from Homo sapiens (Human).